The chain runs to 339 residues: Ribosomal RNA small subunit methyltransferase H (339 aa).

S-adenosyl-L-methionine-binding positions include 56-58, D76, F102, D123, and Q130; that span reads GGH. 2 disordered regions span residues 274 to 309 and 320 to 339; these read RHSR…KAEV and LRVA…PQHS. Polar residues predominate over residues 325-339; the sequence is RTDTPYNTDPSPQHS.

The protein belongs to the methyltransferase superfamily. RsmH family.

Its subcellular location is the cytoplasm. The catalysed reaction is cytidine(1402) in 16S rRNA + S-adenosyl-L-methionine = N(4)-methylcytidine(1402) in 16S rRNA + S-adenosyl-L-homocysteine + H(+). Its function is as follows. Specifically methylates the N4 position of cytidine in position 1402 (C1402) of 16S rRNA. This is Ribosomal RNA small subunit methyltransferase H from Psychrobacter sp. (strain PRwf-1).